The chain runs to 2694 residues: Neurobeachin-like protein 1 (2694 aa).

3 disordered regions span residues 1289–1314 (VLMK…TDEE), 1330–1350 (SLED…DSSV), and 1381–1411 (CEMS…SVHS). Over residues 1290 to 1314 (LMKDNDKNMSTEDTKKNSDEKTDEE) the composition is skewed to basic and acidic residues. Over residues 1383 to 1409 (MSDSGSQVPDSLPSTPSPVESTKSFSV) the composition is skewed to polar residues. One can recognise a BEACH-type PH domain in the interval 1883 to 1980 (DQKEKLVLME…VRNKIYSRLL (98 aa)). In terms of domain architecture, BEACH spans 1992-2284 (RSPQELFKAS…QLLKEPHPPR (293 aa)). WD repeat units follow at residues 2439–2478 (RHMD…GVPV) and 2490–2531 (GHTN…RTLR).

It belongs to the WD repeat neurobeachin family. Highly expressed in brain, kidney, prostate and testis. Weakly expressed in ovary, small intestine, colon and peripheral blood leukocytes. May be correlative to several tumors, such as ovary serous adenocarcinoma and metastasis mammary gland carcinoma breast.

This chain is Neurobeachin-like protein 1 (NBEAL1), found in Homo sapiens (Human).